A 203-amino-acid polypeptide reads, in one-letter code: Outer-membrane lipoprotein carrier protein (203 aa).

Positions Met-1 to Tyr-20 are cleaved as a signal peptide.

This sequence belongs to the LolA family. Monomer.

It is found in the periplasm. In terms of biological role, participates in the translocation of lipoproteins from the inner membrane to the outer membrane. Only forms a complex with a lipoprotein if the residue after the N-terminal Cys is not an aspartate (The Asp acts as a targeting signal to indicate that the lipoprotein should stay in the inner membrane). The sequence is that of Outer-membrane lipoprotein carrier protein from Pectobacterium carotovorum subsp. carotovorum (strain PC1).